Reading from the N-terminus, the 324-residue chain is Beta-ketoacyl-[acyl-carrier-protein] synthase III (324 aa).

Residues Cys112 and His251 contribute to the active site. Residues 252-256 (QANIR) form an ACP-binding region. Asn281 is a catalytic residue.

The protein belongs to the thiolase-like superfamily. FabH family. In terms of assembly, homodimer.

The protein resides in the cytoplasm. It carries out the reaction malonyl-[ACP] + acetyl-CoA + H(+) = 3-oxobutanoyl-[ACP] + CO2 + CoA. It functions in the pathway lipid metabolism; fatty acid biosynthesis. Catalyzes the condensation reaction of fatty acid synthesis by the addition to an acyl acceptor of two carbons from malonyl-ACP. Catalyzes the first condensation reaction which initiates fatty acid synthesis and may therefore play a role in governing the total rate of fatty acid production. Possesses both acetoacetyl-ACP synthase and acetyl transacylase activities. Its substrate specificity determines the biosynthesis of branched-chain and/or straight-chain of fatty acids. The sequence is that of Beta-ketoacyl-[acyl-carrier-protein] synthase III from Desulfotalea psychrophila (strain LSv54 / DSM 12343).